The sequence spans 301 residues: Oxygen-dependent coproporphyrinogen-III oxidase (301 aa).

Residues 49–58 are important for dimerization; sequence VMVDGAVIEK. Residue S93 coordinates substrate. H107 serves as the catalytic Proton donor. Substrate contacts are provided by residues 109-111 and 259-261; these read NVR and GGR. Positions 241-276 are important for dimerization; it reads YAEFNLVIDRGTKFGLQSGGRTESILISLPPRARWG.

This sequence belongs to the aerobic coproporphyrinogen-III oxidase family. In terms of assembly, homodimer.

It is found in the cytoplasm. It carries out the reaction coproporphyrinogen III + O2 + 2 H(+) = protoporphyrinogen IX + 2 CO2 + 2 H2O. It participates in porphyrin-containing compound metabolism; protoporphyrin-IX biosynthesis; protoporphyrinogen-IX from coproporphyrinogen-III (O2 route): step 1/1. Involved in the heme biosynthesis. Catalyzes the aerobic oxidative decarboxylation of propionate groups of rings A and B of coproporphyrinogen-III to yield the vinyl groups in protoporphyrinogen-IX. The protein is Oxygen-dependent coproporphyrinogen-III oxidase of Leishmania major.